We begin with the raw amino-acid sequence, 102 residues long: Glutaredoxin-C13 (102 aa).

The Glutaredoxin domain occupies 1 to 101; the sequence is MDKVMRMSSE…PLIKPYQSIL (101 aa). Cys21 and Cys24 form a disulfide bridge.

It belongs to the glutaredoxin family. CC-type subfamily.

The protein localises to the cytoplasm. Its function is as follows. Has a glutathione-disulfide oxidoreductase activity in the presence of NADPH and glutathione reductase. Reduces low molecular weight disulfides and proteins. The sequence is that of Glutaredoxin-C13 (GRXC13) from Arabidopsis thaliana (Mouse-ear cress).